A 367-amino-acid polypeptide reads, in one-letter code: Probable L-aspartate decarboxylase (367 aa).

Position 216 is an N6-(pyridoxal phosphate)lysine (lysine 216).

The protein belongs to the group II decarboxylase family. MfnA subfamily. Requires pyridoxal 5'-phosphate as cofactor.

The enzyme catalyses L-aspartate + H(+) = beta-alanine + CO2. Its pathway is cofactor biosynthesis; coenzyme A biosynthesis. Catalyzes the decarboxylation of L-aspartate to produce beta-alanine. In Archaeoglobus fulgidus (strain ATCC 49558 / DSM 4304 / JCM 9628 / NBRC 100126 / VC-16), this protein is Probable L-aspartate decarboxylase.